Reading from the N-terminus, the 491-residue chain is Glutamate--tRNA ligase (491 aa).

The 'HIGH' region signature appears at 13-23; that stretch reads PSPTGFLHIGN. C110, C112, C137, and H139 together coordinate Zn(2+). Residues 254 to 258 carry the 'KMSKS' region motif; the sequence is KLSKR. K257 contacts ATP.

The protein belongs to the class-I aminoacyl-tRNA synthetase family. Glutamate--tRNA ligase type 1 subfamily. In terms of assembly, monomer. Zn(2+) serves as cofactor.

It localises to the cytoplasm. The enzyme catalyses tRNA(Glu) + L-glutamate + ATP = L-glutamyl-tRNA(Glu) + AMP + diphosphate. Functionally, catalyzes the attachment of glutamate to tRNA(Glu) in a two-step reaction: glutamate is first activated by ATP to form Glu-AMP and then transferred to the acceptor end of tRNA(Glu). The polypeptide is Glutamate--tRNA ligase (Listeria welshimeri serovar 6b (strain ATCC 35897 / DSM 20650 / CCUG 15529 / CIP 8149 / NCTC 11857 / SLCC 5334 / V8)).